Here is a 201-residue protein sequence, read N- to C-terminus: Small ribosomal subunit protein uS5 (201 aa).

Positions 1 to 27 are disordered; it reads MAGPQRRGSGAGGGERRDRKGRDGGAA. The span at 14 to 23 shows a compositional bias: basic and acidic residues; that stretch reads GERRDRKGRD. The region spanning 34–97 is the S5 DRBM domain; that stretch reads YVERVVAINR…EEAKKHFFKV (64 aa).

It belongs to the universal ribosomal protein uS5 family. In terms of assembly, part of the 30S ribosomal subunit. Contacts proteins S4 and S8.

With S4 and S12 plays an important role in translational accuracy. In terms of biological role, located at the back of the 30S subunit body where it stabilizes the conformation of the head with respect to the body. This chain is Small ribosomal subunit protein uS5, found in Streptomyces avermitilis (strain ATCC 31267 / DSM 46492 / JCM 5070 / NBRC 14893 / NCIMB 12804 / NRRL 8165 / MA-4680).